The chain runs to 426 residues: Maintenance of mitochondrial morphology protein 1 (426 aa).

At 1-100 (MTDSENESTE…KFSGWSFAQG (100 aa)) the chain is on the lumenal side. The chain crosses the membrane as a helical span at residues 101–121 (FFVGQLSIVLLFIFFLKFFIF). The Cytoplasmic portion of the chain corresponds to 122–426 (SDEPSKSKNP…NTREEKPTEL (305 aa)). The 216-residue stretch at 194–409 (PAESLDWFNV…EPRFQFVRLP (216 aa)) folds into the SMP-LTD domain.

It belongs to the MMM1 family. In terms of assembly, homodimer. Component of the ER-mitochondria encounter structure (ERMES) or MDM complex, composed of MMM1, MDM10, MDM12 and MDM34. An MMM1 homodimer associates with one molecule of MDM12 on each side in a pairwise head-to-tail manner, and the SMP-LTD domains of MMM1 and MDM12 generate a continuous hydrophobic tunnel for phospholipid trafficking.

Its subcellular location is the endoplasmic reticulum membrane. In terms of biological role, component of the ERMES/MDM complex, which serves as a molecular tether to connect the endoplasmic reticulum (ER) and mitochondria. Components of this complex are involved in the control of mitochondrial shape and protein biogenesis, and function in nonvesicular lipid trafficking between the ER and mitochondria. The MDM12-MMM1 subcomplex functions in the major beta-barrel assembly pathway that is responsible for biogenesis of all outer membrane beta-barrel proteins, and acts in a late step after the SAM complex. The MDM10-MDM12-MMM1 subcomplex further acts in the TOM40-specific pathway after the action of the MDM12-MMM1 complex. Essential for establishing and maintaining the structure of mitochondria and maintenance of mtDNA nucleoids. This chain is Maintenance of mitochondrial morphology protein 1, found in Saccharomyces cerevisiae (strain AWRI1631) (Baker's yeast).